The primary structure comprises 44 residues: Photosystem I reaction center subunit IX (44 aa).

Residues 7–27 (YLSVAPVLSTLWFGSLAGLLI) traverse the membrane as a helical segment.

This sequence belongs to the PsaJ family.

Its subcellular location is the plastid. The protein resides in the chloroplast thylakoid membrane. Its function is as follows. May help in the organization of the PsaE and PsaF subunits. This is Photosystem I reaction center subunit IX from Lactuca sativa (Garden lettuce).